A 788-amino-acid polypeptide reads, in one-letter code: Cadherin-10 (788 aa).

Positions 1-22 (MTIYQFLRLFVLWACLPHFCCP) are cleaved as a signal peptide. Positions 23-54 (ELTFRRTPGIQQMTAESRAPRSDGKILHRQKR) are excised as a propeptide. The Extracellular segment spans residues 23–613 (ELTFRRTPGI…LLPAGLSTGA (591 aa)). Cadherin domains follow at residues 56–160 (WMWN…EPTF), 161–269 (PEEI…PPRF), 270–384 (PQNT…PPVF), 385–489 (SRSS…APQF), and 489–603 (FAVF…AEAL). Asn-256 carries an N-linked (GlcNAc...) asparagine glycan. N-linked (GlcNAc...) asparagine glycans are attached at residues Asn-456 and Asn-534. A helical transmembrane segment spans residues 614–634 (LIAILLCIIILLVIVVLFAAL). Residues 635-788 (KRQRKKEPLI…YGGGESDKDA (154 aa)) are Cytoplasmic-facing. Ser-784 carries the post-translational modification Phosphoserine.

The protein localises to the cell membrane. Cadherins are calcium-dependent cell adhesion proteins. They preferentially interact with themselves in a homophilic manner in connecting cells; cadherins may thus contribute to the sorting of heterogeneous cell types. The polypeptide is Cadherin-10 (Cdh10) (Mus musculus (Mouse)).